A 548-amino-acid chain; its full sequence is Rop guanine nucleotide exchange factor 1 (548 aa).

The segment covering 1 to 12 (MGSLSSEEDDEV) has biased composition (acidic residues). A disordered region spans residues 1-38 (MGSLSSEEDDEVSSERCGSYSPSADISESESSSSFSCH). Residues 19-36 (SYSPSADISESESSSSFS) are compositionally biased toward low complexity. The region spanning 81-462 (DKQPDNDLSE…DAMRRSISVT (382 aa)) is the PRONE domain. The interval 458-548 (SISVTESLSL…RVTGVTPERD (91 aa)) is involved in auto-inhibition. A phosphoserine mark is found at serine 460 and serine 480.

Interacts with ARAC10/ROP11 and FER. Forms a complex with ARAC11/ROP1 and PRK2. Interacts in vitro (via PRONE domain) with PRK1, PRK2, PRK3 and PRK4. The C-terminal region is also important for the interaction with PRK2. In terms of processing, phosphorylated at Ser-460 and Ser-480 by PRK2. As to expression, expressed in roots, cotyledons, leaves, stems, sepals, petals, anthers, pollen grains, stigmas and siliques.

The protein localises to the cytoplasm. The protein resides in the cytosol. Its subcellular location is the cell membrane. Phosphorylation at Ser-460 and Ser-480 by PRK2 releases ROPGEF1 auto-inhibition, thereby activating ROPGEF1, which in turn activates ARAC11/ROP1. Its function is as follows. Guanine-nucleotide exchange factor (GEF) that acts as an activator of Rop (Rho of plants) GTPases by promoting the exchange of GDP for GTP. Acts downstream of PRK2 in the control of polarized pollen tube growth by activating ARAC11/ROP1. In association with ROPGEF4, acts as a specific regulator of ARAC10/ROP11 function in ABA-mediated stomatal closure. May play a role in the Rac/Rop-signaling pathway that controls ROS-mediated root hair development. The polypeptide is Rop guanine nucleotide exchange factor 1 (ROPGEF1) (Arabidopsis thaliana (Mouse-ear cress)).